The primary structure comprises 125 residues: S-adenosylmethionine decarboxylase proenzyme (125 aa).

The active-site Schiff-base intermediate with substrate; via pyruvic acid is S61. S61 is subject to Pyruvic acid (Ser); by autocatalysis. H66 (proton acceptor; for processing activity) is an active-site residue. The active-site Proton donor; for catalytic activity is the C81.

This sequence belongs to the prokaryotic AdoMetDC family. Type 1 subfamily. Heterotetramer of two alpha and two beta chains arranged as a dimer of alpha/beta heterodimers. Requires pyruvate as cofactor. Is synthesized initially as an inactive proenzyme. Formation of the active enzyme involves a self-maturation process in which the active site pyruvoyl group is generated from an internal serine residue via an autocatalytic post-translational modification. Two non-identical subunits are generated from the proenzyme in this reaction, and the pyruvate is formed at the N-terminus of the alpha chain, which is derived from the carboxyl end of the proenzyme. The post-translation cleavage follows an unusual pathway, termed non-hydrolytic serinolysis, in which the side chain hydroxyl group of the serine supplies its oxygen atom to form the C-terminus of the beta chain, while the remainder of the serine residue undergoes an oxidative deamination to produce ammonia and the pyruvoyl group blocking the N-terminus of the alpha chain.

The catalysed reaction is S-adenosyl-L-methionine + H(+) = S-adenosyl 3-(methylsulfanyl)propylamine + CO2. It functions in the pathway amine and polyamine biosynthesis; S-adenosylmethioninamine biosynthesis; S-adenosylmethioninamine from S-adenosyl-L-methionine: step 1/1. Functionally, catalyzes the decarboxylation of S-adenosylmethionine to S-adenosylmethioninamine (dcAdoMet), the propylamine donor required for the synthesis of the polyamines spermine and spermidine from the diamine putrescine. In Prochlorococcus marinus (strain MIT 9313), this protein is S-adenosylmethionine decarboxylase proenzyme.